A 216-amino-acid chain; its full sequence is Imidazole glycerol phosphate synthase subunit HisH (216 aa).

Residues 5 to 213 (RLAVIDYDAG…VEFVARRLPA (209 aa)) form the Glutamine amidotransferase type-1 domain. The Nucleophile role is filled by Cys-83. Catalysis depends on residues His-188 and Glu-190.

As to quaternary structure, heterodimer of HisH and HisF.

The protein localises to the cytoplasm. The enzyme catalyses 5-[(5-phospho-1-deoxy-D-ribulos-1-ylimino)methylamino]-1-(5-phospho-beta-D-ribosyl)imidazole-4-carboxamide + L-glutamine = D-erythro-1-(imidazol-4-yl)glycerol 3-phosphate + 5-amino-1-(5-phospho-beta-D-ribosyl)imidazole-4-carboxamide + L-glutamate + H(+). It catalyses the reaction L-glutamine + H2O = L-glutamate + NH4(+). Its pathway is amino-acid biosynthesis; L-histidine biosynthesis; L-histidine from 5-phospho-alpha-D-ribose 1-diphosphate: step 5/9. Its function is as follows. IGPS catalyzes the conversion of PRFAR and glutamine to IGP, AICAR and glutamate. The HisH subunit catalyzes the hydrolysis of glutamine to glutamate and ammonia as part of the synthesis of IGP and AICAR. The resulting ammonia molecule is channeled to the active site of HisF. In Synechococcus sp. (strain JA-3-3Ab) (Cyanobacteria bacterium Yellowstone A-Prime), this protein is Imidazole glycerol phosphate synthase subunit HisH.